The chain runs to 356 residues: Guanine nucleotide-binding protein alpha-3 subunit (356 aa).

A disordered region spans residues 1–26 (MGACMSKNDEETEQKKRSQKIDRDLE). Gly2 carries N-myristoyl glycine lipidation. Cys4 is lipidated: S-palmitoyl cysteine. Residues 7 to 23 (KNDEETEQKKRSQKIDR) show a composition bias toward basic and acidic residues. The G-alpha domain maps to 34-356 (KECKILLLGS…NNALKDSGIL (323 aa)). The tract at residues 37–50 (KILLLGSGESGKST) is G1 motif. GTP-binding positions include 42 to 49 (GSGESGKS), 179 to 185 (LRARTKT), 204 to 208 (DVGGQ), 273 to 276 (NKVD), and Ala328. Ser49 and Thr185 together coordinate Mg(2+). The tract at residues 177 to 185 (DVLRARTKT) is G2 motif. Residues 200 to 209 (IHMFDVGGQR) are G3 motif. A G4 motif region spans residues 269-276 (ILFLNKVD). The interval 326–331 (TQATDT) is G5 motif.

Belongs to the G-alpha family. G(q) subfamily. As to quaternary structure, g proteins are composed of 3 units; alpha, beta and gamma. The alpha chain contains the guanine nucleotide binding site.

Guanine nucleotide-binding proteins (G proteins) are involved as modulators or transducers in various transmembrane signaling systems. Involved in conidiation. The protein is Guanine nucleotide-binding protein alpha-3 subunit (gna-3) of Neurospora crassa (strain ATCC 24698 / 74-OR23-1A / CBS 708.71 / DSM 1257 / FGSC 987).